A 248-amino-acid polypeptide reads, in one-letter code: 3-deoxy-manno-octulosonate cytidylyltransferase (248 aa).

This sequence belongs to the KdsB family.

The protein localises to the cytoplasm. The catalysed reaction is 3-deoxy-alpha-D-manno-oct-2-ulosonate + CTP = CMP-3-deoxy-beta-D-manno-octulosonate + diphosphate. It functions in the pathway nucleotide-sugar biosynthesis; CMP-3-deoxy-D-manno-octulosonate biosynthesis; CMP-3-deoxy-D-manno-octulosonate from 3-deoxy-D-manno-octulosonate and CTP: step 1/1. Its pathway is bacterial outer membrane biogenesis; lipopolysaccharide biosynthesis. Activates KDO (a required 8-carbon sugar) for incorporation into bacterial lipopolysaccharide in Gram-negative bacteria. This chain is 3-deoxy-manno-octulosonate cytidylyltransferase, found in Salmonella paratyphi A (strain ATCC 9150 / SARB42).